A 113-amino-acid polypeptide reads, in one-letter code: Dolichyl-diphosphooligosaccharide--protein glycosyltransferase subunit DAD1 (113 aa).

Serine 2 carries the N-acetylserine modification. Over 2–30 the chain is Cytoplasmic; the sequence is SASVLSVISRFLEEYLSATPQRLKLLDAY. Residues 31–51 traverse the membrane as a helical segment; the sequence is LLYILLTGALQFGYCLLVGTF. Proline 52 is a topological domain (lumenal). A helical transmembrane segment spans residues 53 to 73; that stretch reads FNSFLSGFISCVGSFILAVCL. Residues 74–92 are Cytoplasmic-facing; the sequence is RIQINPQNKADFQGISPER. Residues 93 to 113 traverse the membrane as a helical segment; it reads AFADFLFASTILHLVVMNFVG.

This sequence belongs to the DAD/OST2 family. As to quaternary structure, component of the oligosaccharyltransferase (OST) complex. OST exists in two different complex forms which contain common core subunits RPN1, RPN2, OST48, OST4, DAD1 and TMEM258, either STT3A or STT3B as catalytic subunits, and form-specific accessory subunits. STT3A complex assembly occurs through the formation of 3 subcomplexes. Subcomplex 1 contains RPN1 and TMEM258, subcomplex 2 contains the STT3A-specific subunits STT3A, DC2/OSTC, and KCP2 as well as the core subunit OST4, and subcomplex 3 contains RPN2, DAD1, and OST48. The STT3A complex can form stable complexes with the Sec61 complex or with both the Sec61 and TRAP complexes.

The protein localises to the endoplasmic reticulum membrane. It functions in the pathway protein modification; protein glycosylation. Functionally, subunit of the oligosaccharyl transferase (OST) complex that catalyzes the initial transfer of a defined glycan (Glc(3)Man(9)GlcNAc(2) in eukaryotes) from the lipid carrier dolichol-pyrophosphate to an asparagine residue within an Asn-X-Ser/Thr consensus motif in nascent polypeptide chains, the first step in protein N-glycosylation. N-glycosylation occurs cotranslationally and the complex associates with the Sec61 complex at the channel-forming translocon complex that mediates protein translocation across the endoplasmic reticulum (ER). All subunits are required for a maximal enzyme activity. In Bos taurus (Bovine), this protein is Dolichyl-diphosphooligosaccharide--protein glycosyltransferase subunit DAD1.